The chain runs to 358 residues: MAIPLVLLLAWLLPTVFAASLTQVSNFGDNPGSLQMYIYVPNNLASKPAIIVAMHPCGGSATQYYGMYDYHTPADQYGYILIYPSATRDLNCFDADTAASLTHNGGSDSLSIVNMVKYTISKYGADSSKVYMTGSSSGAIMTNVLAGTYPDVFAAGAAFSGMPFACLSGAGGADPAMSNQTCSRGQINHTPQEWAAYVHNAYPGYTGQYPRLQVWHGTADNVISYTDFNQEISQWTTVMGLSFTSNQTNTPLSGYTKMIYGDGSRFQAFSASGVGHFVPTDVSVVLDWFGITGGGGGNGGGSGSTTTTTSATTTSTGPTGGCTAAHWDQCGGNGYTGCTSCASPYTCQKVNDYYSQCL.

A signal peptide spans 1 to 18 (MAIPLVLLLAWLLPTVFA). The catalytic stretch occupies residues 19–291 (ASLTQVSNFG…VSVVLDWFGI (273 aa)). Catalysis depends on Ser-136, which acts as the Charge relay system. Residues Asn-179 and Asn-246 are each glycosylated (N-linked (GlcNAc...) asparagine). The gly/Thr-rich linker stretch occupies residues 292-321 (TGGGGGNGGGSGSTTTTTSATTTSTGPTGG). Positions 297-318 (GNGGGSGSTTTTTSATTTSTGP) are disordered. Residues 304–318 (STTTTTSATTTSTGP) show a composition bias toward low complexity. Positions 322–358 (CTAAHWDQCGGNGYTGCTSCASPYTCQKVNDYYSQCL) constitute a CBM1 domain.

Belongs to the carbohydrate esterase 1 (CE1) family. Feruloyl esterase type B subfamily.

Its subcellular location is the secreted. The catalysed reaction is feruloyl-polysaccharide + H2O = ferulate + polysaccharide.. Its function is as follows. Involved in degradation of plant cell walls. Hydrolyzes the feruloyl-arabinose ester bond in arabinoxylans as well as the feruloyl-galactose and feruloyl-arabinose ester bonds in pectin. Active against methyl esters of caffeate (MCA), but not sinapate (MSA). The polypeptide is Feruloyl esterase B (faeB) (Talaromyces stipitatus (strain ATCC 10500 / CBS 375.48 / QM 6759 / NRRL 1006) (Penicillium stipitatum)).